Consider the following 317-residue polypeptide: 4-hydroxy-3-methylbut-2-enyl diphosphate reductase (317 aa).

Residue Cys12 coordinates [4Fe-4S] cluster. His41 and His74 together coordinate (2E)-4-hydroxy-3-methylbut-2-enyl diphosphate. Dimethylallyl diphosphate contacts are provided by His41 and His74. Residues His41 and His74 each coordinate isopentenyl diphosphate. Cys97 contacts [4Fe-4S] cluster. His125 serves as a coordination point for (2E)-4-hydroxy-3-methylbut-2-enyl diphosphate. Residue His125 coordinates dimethylallyl diphosphate. Isopentenyl diphosphate is bound at residue His125. Glu127 serves as the catalytic Proton donor. Thr168 lines the (2E)-4-hydroxy-3-methylbut-2-enyl diphosphate pocket. Cys198 is a [4Fe-4S] cluster binding site. Residues Ser226, Ser227, Asn228, and Ser270 each contribute to the (2E)-4-hydroxy-3-methylbut-2-enyl diphosphate site. 4 residues coordinate dimethylallyl diphosphate: Ser226, Ser227, Asn228, and Ser270. Residues Ser226, Ser227, Asn228, and Ser270 each coordinate isopentenyl diphosphate.

This sequence belongs to the IspH family. Homodimer. [4Fe-4S] cluster is required as a cofactor.

It carries out the reaction isopentenyl diphosphate + 2 oxidized [2Fe-2S]-[ferredoxin] + H2O = (2E)-4-hydroxy-3-methylbut-2-enyl diphosphate + 2 reduced [2Fe-2S]-[ferredoxin] + 2 H(+). The catalysed reaction is dimethylallyl diphosphate + 2 oxidized [2Fe-2S]-[ferredoxin] + H2O = (2E)-4-hydroxy-3-methylbut-2-enyl diphosphate + 2 reduced [2Fe-2S]-[ferredoxin] + 2 H(+). Its pathway is isoprenoid biosynthesis; dimethylallyl diphosphate biosynthesis; dimethylallyl diphosphate from (2E)-4-hydroxy-3-methylbutenyl diphosphate: step 1/1. It functions in the pathway isoprenoid biosynthesis; isopentenyl diphosphate biosynthesis via DXP pathway; isopentenyl diphosphate from 1-deoxy-D-xylulose 5-phosphate: step 6/6. Functionally, catalyzes the conversion of 1-hydroxy-2-methyl-2-(E)-butenyl 4-diphosphate (HMBPP) into a mixture of isopentenyl diphosphate (IPP) and dimethylallyl diphosphate (DMAPP). Acts in the terminal step of the DOXP/MEP pathway for isoprenoid precursor biosynthesis. This chain is 4-hydroxy-3-methylbut-2-enyl diphosphate reductase, found in Proteus mirabilis (strain HI4320).